A 454-amino-acid polypeptide reads, in one-letter code: tRNA modification GTPase MnmE (454 aa).

Residues R23, E80, and K120 each contribute to the (6S)-5-formyl-5,6,7,8-tetrahydrofolate site. The region spanning G216–G377 is the TrmE-type G domain. Residue N226 coordinates K(+). Residues N226–S231, T245–T251, D270–G273, N335–D338, and S358–R360 contribute to the GTP site. S230 serves as a coordination point for Mg(2+). Residues T245, I247, and T250 each coordinate K(+). Position 251 (T251) interacts with Mg(2+). K454 contacts (6S)-5-formyl-5,6,7,8-tetrahydrofolate.

Belongs to the TRAFAC class TrmE-Era-EngA-EngB-Septin-like GTPase superfamily. TrmE GTPase family. In terms of assembly, homodimer. Heterotetramer of two MnmE and two MnmG subunits. The cofactor is K(+).

It is found in the cytoplasm. Functionally, exhibits a very high intrinsic GTPase hydrolysis rate. Involved in the addition of a carboxymethylaminomethyl (cmnm) group at the wobble position (U34) of certain tRNAs, forming tRNA-cmnm(5)s(2)U34. This Yersinia pseudotuberculosis serotype O:3 (strain YPIII) protein is tRNA modification GTPase MnmE.